Here is a 92-residue protein sequence, read N- to C-terminus: Neuropeptide F (92 aa).

The signal sequence occupies residues 1–27; that stretch reads MSQSRPLALLVVAALVAAAVLVAAAEA. The propeptide occupies 28–51; the sequence is QQADGNKLEGLADALKYLQELDRY. Residue F60 is modified to Phenylalanine amide. Residues 64–92 constitute a propeptide that is removed on maturation; the sequence is AELRPDVVDDVIPEEMSADKFWRRFARRR.

This sequence belongs to the NPY family. In terms of tissue distribution, widely expressed in the nervous system. Expressed in corpora cardiaca, hypocerebral ganglion, frontal ganglion, protocerebrum, antennal lobe, tritocerebrum and thoracic ganglia. Not detected in corpora allata, pars intercerebralis, circumesophageal connectives, subesophageal ganglion, abdominal ganglion and abdominal perisympathetic organs.

It is found in the secreted. Functionally, accelerates ovarian maturation in females. In Locusta migratoria (Migratory locust), this protein is Neuropeptide F.